The following is a 433-amino-acid chain: Phosphomethylpyrimidine synthase 1 (433 aa).

Residues Asn66, Met94, Tyr123, His162, 184-186 (SRG), 225-228 (DALR), and Glu264 contribute to the substrate site. His268 is a binding site for Zn(2+). Tyr291 lines the substrate pocket. His332 lines the Zn(2+) pocket. The [4Fe-4S] cluster site is built by Cys408, Cys411, and Cys415.

The protein belongs to the ThiC family. [4Fe-4S] cluster serves as cofactor.

The enzyme catalyses 5-amino-1-(5-phospho-beta-D-ribosyl)imidazole + S-adenosyl-L-methionine = 4-amino-2-methyl-5-(phosphooxymethyl)pyrimidine + CO + 5'-deoxyadenosine + formate + L-methionine + 3 H(+). The protein operates within cofactor biosynthesis; thiamine diphosphate biosynthesis. Catalyzes the synthesis of the hydroxymethylpyrimidine phosphate (HMP-P) moiety of thiamine from aminoimidazole ribotide (AIR) in a radical S-adenosyl-L-methionine (SAM)-dependent reaction. The chain is Phosphomethylpyrimidine synthase 1 from Saccharolobus solfataricus (strain ATCC 35092 / DSM 1617 / JCM 11322 / P2) (Sulfolobus solfataricus).